Consider the following 603-residue polypeptide: Nuclear receptor subfamily 2 group C member 1 (603 aa).

Residues 1–178 form a required for interaction with KAT2B region; sequence MATIEEIAHQ…RLQRCIAFGM (178 aa). The nuclear receptor DNA-binding region spans 110 to 185; sequence FDLCVVCGDK…FGMKQDSVQC (76 aa). NR C4-type zinc fingers lie at residues 113-133 and 149-173; these read CVVCGDKASGRHYGAVTCEGC and CRGSKDCIINKHHRNRCQYCRLQRC. 2 positions are modified to phosphoserine: S197 and S215. A Phosphothreonine modification is found at T220. The residue at position 222 (T222) is a Phosphothreonine; by MAPK1. K250 is covalently cross-linked (Glycyl lysine isopeptide (Lys-Gly) (interchain with G-Cter in SUMO2)). The NR LBD domain occupies 348 to 590; sequence GSVHLITGDS…SVIPHILKME (243 aa). S581 is subject to Phosphoserine; by PKC. The segment at 584-603 is required for interaction with NRIP1; the sequence is PHILKMEPADYNSQIIGHSI. A Glycyl lysine isopeptide (Lys-Gly) (interchain with G-Cter in SUMO2) cross-link involves residue K588.

It belongs to the nuclear hormone receptor family. NR2 subfamily. In terms of assembly, homodimer. Heterodimer; binds DNA as a heterodimer with NR2C2 required for chromatin remodeling and for binding to promoter regions such as globin DR1 repeats. Interacts with NRIP1 (via its LXXLL motifs); the interaction provides corepressor activity. Interacts with HDAC3 (via the DNA-binding domain). Interacts with HDAC4 (via the DNA-binding domain). Interacts with PIAS1; the interaction is required for sumoylation of NR2C1. Interacts with UBE2I; the interaction is required for sumoylation of NR2C1. Interacts with KAT2B; the interaction acts as a corepressor of gene expression. Interacts with ESR1; the interaction prevents homodimerization of ESR1 and suppresses its transcriptional activity and cell growth. In terms of processing, sumoylation requires both PIAS1 and UBE2I. Sumoylation appears to dissociate NR2C1 from the PML nuclear bodies. Enhances the interaction with NRIP1 but inhibits interaction with KAT2B. In proliferating cells, stimulation by all-trans retinoic acid, activation of MAPK1-mediated phosphorylation and recruitment to PML bodies with subsequent sumoylation, suppresses OCT4 expression. Phosphorylated on several serine and threonine residues. Phosphorylation on Thr-222, stimulated by all-trans retinoic acid (atRA) mediates PML location and sumoylation in proliferating cells which then modulates its association with effector molecules, KAT2B and NRIP1. Phosphorylation on Ser-581 by PKC is important for protein stability and function as activator of RARB.

It is found in the nucleus. The protein resides in the PML body. In terms of biological role, orphan nuclear receptor. Binds the IR7 element in the promoter of its own gene in an autoregulatory negative feedback mechanism. Primarily repressor of a broad range of genes. Binds to hormone response elements (HREs) consisting of two 5'-AGGTCA-3' half site direct repeat consensus sequences. Together with NR2C2, forms the core of the DRED (direct repeat erythroid-definitive) complex that represses embryonic and fetal globin transcription. Also activator of OCT4 gene expression. May be involved in stem cell proliferation and differentiation. Mediator of retinoic acid-regulated preadipocyte proliferation. The chain is Nuclear receptor subfamily 2 group C member 1 (NR2C1) from Homo sapiens (Human).